Consider the following 631-residue polypeptide: Coiled-coil domain-containing protein 93 (631 aa).

2 disordered regions span residues 1–23 (MGLP…DEEQ) and 214–243 (QSKM…HEED). The segment at 1-430 (MGLPRGPEGQ…LKAERAPRGD (430 aa)) is sufficient for interaction with CCDC22. Residues 215 to 225 (SKMEKAEDKKT) are compositionally biased toward basic and acidic residues. A phosphoserine mark is found at Ser298, Ser301, and Ser305. A coiled-coil region spans residues 309–631 (LGTSQLHRRK…LLSKVKAKAS (323 aa)). The span at 421 to 433 (LKAERAPRGDEKT) shows a compositional bias: basic and acidic residues. Positions 421–447 (LKAERAPRGDEKTLSSGEPPGTLTSAM) are disordered. A sufficient for interaction with WASHC2C region spans residues 448 to 631 (THDEDLDRRY…LLSKVKAKAS (184 aa)).

Belongs to the CCDC93 family. As to quaternary structure, component of the commander complex consisting of the CCC subcomplex and the retriever subcomplex. Component of the CCC (COMMD/CCDC22/CCDC93) subcomplex consisting of COMMD1, COMMD2, COMMD3, COMMD4, COMMD5, COMMD6, COMMD7, COMMD8, COMMD9, COMMD10, CCDC22 and CCDC93. Forms a coiled-coil heterodimer with CCDC22; this heterodimer interacts with the guanine nucleotide exchange factor DENND10; the interaction is direct. Interacts with WASHC1. Interacts directly with WASHC2C. Interacts with SNX17 and SNX31.

It is found in the early endosome. In terms of biological role, component of the commander complex that is essential for endosomal recycling of transmembrane cargos; the commander complex is composed of composed of the CCC subcomplex and the retriever subcomplex. Component of the CCC complex, which is involved in the regulation of endosomal recycling of surface proteins, including integrins, signaling receptor and channels. The CCC complex associates with SNX17, retriever and WASH complexes to prevent lysosomal degradation and promote cell surface recycling of numerous cargos such as integrins ITGA5:ITGB1. Involved in copper-dependent ATP7A trafficking between the trans-Golgi network and vesicles in the cell periphery; the function is proposed to depend on its association within the CCC complex and cooperation with the WASH complex on early endosomes and is dependent on its interaction with WASHC2C. (Microbial infection) The CCC complex, in collaboration with the heterotrimeric retriever complex, mediates the exit of human papillomavirus to the cell surface. In Homo sapiens (Human), this protein is Coiled-coil domain-containing protein 93 (CCDC93).